The chain runs to 348 residues: D-alanine--D-alanine ligase (348 aa).

In terms of domain architecture, ATP-grasp spans 132 to 334 (KRVLESAGIA…YPDLIEKLVA (203 aa)). 162–217 (EEKLSYPVFTKPSNMGSSVGISKSDNQEELRASLDLAFKYDSRVLVEQGVTAREIE) is a binding site for ATP. 3 residues coordinate Mg(2+): D288, E301, and N303.

The protein belongs to the D-alanine--D-alanine ligase family. Mg(2+) is required as a cofactor. The cofactor is Mn(2+).

Its subcellular location is the cytoplasm. The catalysed reaction is 2 D-alanine + ATP = D-alanyl-D-alanine + ADP + phosphate + H(+). The protein operates within cell wall biogenesis; peptidoglycan biosynthesis. Its function is as follows. Cell wall formation. This Streptococcus gordonii (strain Challis / ATCC 35105 / BCRC 15272 / CH1 / DL1 / V288) protein is D-alanine--D-alanine ligase.